The following is a 189-amino-acid chain: MISTTIFIISSLAAVTYGRSHLTVPVGSTCTLQGPQQGYVTWWRIYDNGGFARPCDQPGTKFSCNGRDLTIINITSNEQGFYYGTNYKDSLDYNIIVVPATTSAPRKTTFSSSSAKASTIPKTASAMLKLQKIALSNSTAAPKTIPKSTIGIITAVVVGLIIIFLCIMYYACCYRKHEQKGDALLNFDI.

2 N-linked (GlcNAc...) asparagine; by host glycosylation sites follow: asparagine 73 and asparagine 137.

It belongs to the adenoviridae E3_20 family.

Functionally, E3 proteins seem to be dispensable for virus growth in tissue culture cells. They are potentially important for virus growth under special conditions; E3 region may help adenoviruses to evade the immune surveillance of the host. This chain is Early E3 20.5 kDa glycoprotein, found in Homo sapiens (Human).